We begin with the raw amino-acid sequence, 517 residues long: 2-isopropylmalate synthase (517 aa).

The Pyruvate carboxyltransferase domain occupies isoleucine 5 to histidine 268. Aspartate 14, histidine 202, histidine 204, and asparagine 238 together coordinate Mn(2+). The regulatory domain stretch occupies residues serine 393 to glutamine 517.

This sequence belongs to the alpha-IPM synthase/homocitrate synthase family. LeuA type 1 subfamily. In terms of assembly, homodimer. Mn(2+) is required as a cofactor.

It is found in the cytoplasm. It catalyses the reaction 3-methyl-2-oxobutanoate + acetyl-CoA + H2O = (2S)-2-isopropylmalate + CoA + H(+). It participates in amino-acid biosynthesis; L-leucine biosynthesis; L-leucine from 3-methyl-2-oxobutanoate: step 1/4. Functionally, catalyzes the condensation of the acetyl group of acetyl-CoA with 3-methyl-2-oxobutanoate (2-ketoisovalerate) to form 3-carboxy-3-hydroxy-4-methylpentanoate (2-isopropylmalate). In Histophilus somni (strain 2336) (Haemophilus somnus), this protein is 2-isopropylmalate synthase.